Here is a 1177-residue protein sequence, read N- to C-terminus: DNA-directed RNA polymerase subunit beta' (1177 aa).

4 residues coordinate Zn(2+): Cys60, Cys62, Cys75, and Cys78. Positions 450, 452, and 454 each coordinate Mg(2+). Residues Cys795, Cys869, Cys876, and Cys879 each coordinate Zn(2+).

Belongs to the RNA polymerase beta' chain family. In terms of assembly, the RNAP catalytic core consists of 2 alpha, 1 beta, 1 beta' and 1 omega subunit. When a sigma factor is associated with the core the holoenzyme is formed, which can initiate transcription. Mg(2+) is required as a cofactor. Requires Zn(2+) as cofactor.

It catalyses the reaction RNA(n) + a ribonucleoside 5'-triphosphate = RNA(n+1) + diphosphate. In terms of biological role, DNA-dependent RNA polymerase catalyzes the transcription of DNA into RNA using the four ribonucleoside triphosphates as substrates. This is DNA-directed RNA polymerase subunit beta' from Clostridium botulinum (strain Eklund 17B / Type B).